Here is a 623-residue protein sequence, read N- to C-terminus: Arginine decarboxylase 2 (623 aa).

An N6-(pyridoxal phosphate)lysine modification is found at Lys109. A substrate-binding site is contributed by 295–305 (LDCGGGLGVDY).

It belongs to the Orn/Lys/Arg decarboxylase class-II family. SpeA subfamily. The cofactor is pyridoxal 5'-phosphate. It depends on Mg(2+) as a cofactor. As to expression, expressed in stems (at protein level).

The catalysed reaction is L-arginine + H(+) = agmatine + CO2. It functions in the pathway amine and polyamine biosynthesis; agmatine biosynthesis; agmatine from L-arginine: step 1/1. The sequence is that of Arginine decarboxylase 2 (ADC2) from Oryza sativa subsp. japonica (Rice).